Reading from the N-terminus, the 121-residue chain is Large ribosomal subunit protein bL20 (121 aa).

The protein belongs to the bacterial ribosomal protein bL20 family.

Functionally, binds directly to 23S ribosomal RNA and is necessary for the in vitro assembly process of the 50S ribosomal subunit. It is not involved in the protein synthesizing functions of that subunit. This chain is Large ribosomal subunit protein bL20, found in Roseobacter denitrificans (strain ATCC 33942 / OCh 114) (Erythrobacter sp. (strain OCh 114)).